The sequence spans 139 residues: S-adenosyl-L-methionine-binding protein AF_0241 (139 aa).

Positions 3-133 (LKPIGVVKSP…YSPEIDCVNQ (131 aa)) constitute a TsaA-like domain. S-adenosyl-L-methionine contacts are provided by residues Gln16, 20 to 22 (PRQ), 58 to 59 (DK), Arg82, Leu92, and 113 to 116 (LDGS).

This sequence belongs to the tRNA methyltransferase O family. Homodimer.

The chain is S-adenosyl-L-methionine-binding protein AF_0241 from Archaeoglobus fulgidus (strain ATCC 49558 / DSM 4304 / JCM 9628 / NBRC 100126 / VC-16).